A 302-amino-acid polypeptide reads, in one-letter code: Sulfate adenylyltransferase subunit 2 (302 aa).

The protein belongs to the PAPS reductase family. CysD subfamily. As to quaternary structure, heterodimer composed of CysD, the smaller subunit, and CysN.

It carries out the reaction sulfate + ATP + H(+) = adenosine 5'-phosphosulfate + diphosphate. It participates in sulfur metabolism; hydrogen sulfide biosynthesis; sulfite from sulfate: step 1/3. Functionally, with CysN forms the ATP sulfurylase (ATPS) that catalyzes the adenylation of sulfate producing adenosine 5'-phosphosulfate (APS) and diphosphate, the first enzymatic step in sulfur assimilation pathway. APS synthesis involves the formation of a high-energy phosphoric-sulfuric acid anhydride bond driven by GTP hydrolysis by CysN coupled to ATP hydrolysis by CysD. This is Sulfate adenylyltransferase subunit 2 from Xanthomonas axonopodis pv. citri (strain 306).